We begin with the raw amino-acid sequence, 282 residues long: uncharacterized protein (282 aa).

Belongs to the glycosyltransferase 2 family. WaaE/KdtX subfamily.

This is an uncharacterized protein from Rickettsia conorii (strain ATCC VR-613 / Malish 7).